Consider the following 357-residue polypeptide: Quinolinate synthase (357 aa).

Positions 50 and 71 each coordinate iminosuccinate. C116 contacts [4Fe-4S] cluster. Residues Y142–N144 and S159 each bind iminosuccinate. [4Fe-4S] cluster is bound at residue C203. Iminosuccinate is bound by residues H229–E231 and T246. Position 300 (C300) interacts with [4Fe-4S] cluster.

Belongs to the quinolinate synthase family. Type 1 subfamily. Requires [4Fe-4S] cluster as cofactor.

The protein resides in the cytoplasm. The enzyme catalyses iminosuccinate + dihydroxyacetone phosphate = quinolinate + phosphate + 2 H2O + H(+). It functions in the pathway cofactor biosynthesis; NAD(+) biosynthesis; quinolinate from iminoaspartate: step 1/1. In terms of biological role, catalyzes the condensation of iminoaspartate with dihydroxyacetone phosphate to form quinolinate. This is Quinolinate synthase from Shewanella sp. (strain MR-4).